A 588-amino-acid chain; its full sequence is DNA mismatch repair protein MutL (588 aa).

Belongs to the DNA mismatch repair MutL/HexB family.

Its function is as follows. This protein is involved in the repair of mismatches in DNA. It is required for dam-dependent methyl-directed DNA mismatch repair. May act as a 'molecular matchmaker', a protein that promotes the formation of a stable complex between two or more DNA-binding proteins in an ATP-dependent manner without itself being part of a final effector complex. This chain is DNA mismatch repair protein MutL, found in Methanocorpusculum labreanum (strain ATCC 43576 / DSM 4855 / Z).